Consider the following 315-residue polypeptide: 10-epi-cubebol synthase (315 aa).

Residues aspartate 79, asparagine 220, serine 224, and glutamate 228 each contribute to the Mg(2+) site. Residues 79–83 carry the DDXXD motif motif; it reads DDVCE. An NXXXSXXXE motif motif is present at residues 220-228; sequence NDIYSLRKE.

This sequence belongs to the terpene synthase family. Mg(2+) serves as cofactor.

The enzyme catalyses (2E,6E)-farnesyl diphosphate + H2O = 10-epi-cubebol + diphosphate. Its function is as follows. Catalyzes the cyclization of farnesyl diphosphate (FPP) to 10-epi-cubebol. Is also responsible for the formation of many other sesquiterpenes, mainly cadalanes and cubebanes, including 1,10-di-epi-cubebol and the cadalanes delta-cadinene, T-cadinol and alpha-cadinol. This chain is 10-epi-cubebol synthase, found in Sorangium cellulosum (strain So ce56) (Polyangium cellulosum (strain So ce56)).